A 629-amino-acid chain; its full sequence is Kelch-like protein 8 (629 aa).

Positions 1–10 (MASESTNGKQ) are enriched in polar residues. Residues 1–40 (MASESTNGKQARSHVTKGRRQYQHQHQQQQQQQQQVRSRS) form a disordered region. Ala2 carries the N-acetylalanine modification. A compositionally biased stretch (basic residues) spans 11-23 (ARSHVTKGRRQYQ). The span at 24–35 (HQHQQQQQQQQQ) shows a compositional bias: low complexity. A BTB domain is found at 76–143 (CDVTLKVGSK…VYSSRLTLTV (68 aa)). The region spanning 178-279 (CLAVRAFAES…LPVDFLMGVV (102 aa)) is the BACK domain. 6 Kelch repeats span residues 328–375 (VLFC…SVEG), 376–422 (KVYA…SLGG), 424–469 (IYAI…ALIN), 471–516 (VYAV…ELHG), 517–563 (CLYV…TVMG), and 565–610 (IFAV…VCDC).

As to quaternary structure, component of the BCR(KLHL8) E3 ubiquitin ligase complex, at least composed of CUL3, KLHL8 and RBX1. Interacts with RAPSN.

It participates in protein modification; protein ubiquitination. In terms of biological role, substrate-specific adapter of a BCR (BTB-CUL3-RBX1) E3 ubiquitin ligase complex required for The BCR(KLHL8) ubiquitin ligase complex mediates ubiquitination and degradation of RAPSN. The protein is Kelch-like protein 8 (Klhl8) of Mus musculus (Mouse).